A 536-amino-acid chain; its full sequence is Lysosomal acid glucosylceramidase (536 aa).

Residues 1 to 39 form the signal peptide; that stretch reads MEFSSPSREECPKPSGRVNIMAGSLTGLLLLQAVSWASG. Disulfide bonds link Cys43–Cys55 and Cys57–Cys62. Residues Asn58, Asn98, and Asn185 are each glycosylated (N-linked (GlcNAc...) asparagine). Residue Glu274 is the Proton donor of the active site. Residue Asn309 is glycosylated (N-linked (GlcNAc...) asparagine). The Nucleophile role is filled by Glu379. The N-linked (GlcNAc...) asparagine glycan is linked to Asn501.

Belongs to the glycosyl hydrolase 30 family. As to quaternary structure, interacts with saposin-C. Interacts with SCARB2. Interacts with TCP1. Interacts with GRN; this interaction prevents aggregation of GBA1-SCARB2 complex via interaction with HSPA1A upon stress.

It is found in the lysosome membrane. The enzyme catalyses a beta-D-glucosyl-(1&lt;-&gt;1')-N-acylsphing-4-enine + H2O = an N-acylsphing-4-enine + D-glucose. It catalyses the reaction a beta-D-galactosyl-(1&lt;-&gt;1')-N-acylsphing-4-enine + H2O = an N-acylsphing-4-enine + D-galactose. It carries out the reaction cholesteryl 3-beta-D-glucoside + H2O = cholesterol + D-glucose. The catalysed reaction is a beta-D-glucosyl-(1&lt;-&gt;1')-N-acylsphing-4-enine + cholesterol = cholesteryl 3-beta-D-glucoside + an N-acylsphing-4-enine. The enzyme catalyses beta-D-glucosyl-N-(9Z-octadecenoyl)-sphing-4E-enine + cholesterol = N-(9Z-octadecenoyl)-sphing-4-enine + cholesteryl 3-beta-D-glucoside. It catalyses the reaction beta-D-glucosyl-N-octanoylsphing-4E-enine + cholesterol = N-octanoylsphing-4-enine + cholesteryl 3-beta-D-glucoside. It carries out the reaction beta-D-glucosyl-N-dodecanoylsphing-4-enine + cholesterol = N-dodecanoylsphing-4-enine + cholesteryl 3-beta-D-glucoside. The catalysed reaction is beta-D-glucosyl-(1&lt;-&gt;1)-N-octadecanoylsphing-4-enine + cholesterol = N-octadecanoylsphing-4-enine + cholesteryl 3-beta-D-glucoside. The enzyme catalyses beta-D-glucosyl-(1&lt;-&gt;1')-N-(15Z-tetracosenoyl)-sphing-4-enine + cholesterol = N-(15Z-tetracosenoyl)-sphing-4-enine + cholesteryl 3-beta-D-glucoside. It catalyses the reaction a beta-D-galactosyl-(1&lt;-&gt;1')-N-acylsphing-4-enine + cholesterol = cholesteryl 3-beta-D-galactoside + an N-acylsphing-4-enine. It carries out the reaction 1-(beta-D-galactosyl)-N-dodecanoylsphing-4-enine + cholesterol = cholesteryl 3-beta-D-galactoside + N-dodecanoylsphing-4-enine. The catalysed reaction is a beta-D-xylosyl-(1&lt;-&gt;1')-N-acylsphing-4-enine + cholesterol = cholesteryl 3-beta-D-xyloside + an N-acylsphing-4-enine. The enzyme catalyses beta-D-xylosyl-(1&lt;-&gt;1')-N-(9Z-octadecenoyl)-sphing-4-enine + cholesterol = cholesteryl 3-beta-D-xyloside + N-(9Z-octadecenoyl)-sphing-4-enine. It functions in the pathway steroid metabolism; cholesterol metabolism. It participates in sphingolipid metabolism. Its function is as follows. Glucosylceramidase that catalyzes, within the lysosomal compartment, the hydrolysis of glucosylceramides/GlcCers (such as beta-D-glucosyl-(1&lt;-&gt;1')-N-acylsphing-4-enine) into free ceramides (such as N-acylsphing-4-enine) and glucose. Plays a central role in the degradation of complex lipids and the turnover of cellular membranes. Through the production of ceramides, participates in the PKC-activated salvage pathway of ceramide formation. Catalyzes the glucosylation of cholesterol, through a transglucosylation reaction where glucose is transferred from GlcCer to cholesterol. GlcCer containing mono-unsaturated fatty acids (such as beta-D-glucosyl-N-(9Z-octadecenoyl)-sphing-4-enine) are preferred as glucose donors for cholesterol glucosylation when compared with GlcCer containing same chain length of saturated fatty acids (such as beta-D-glucosyl-N-octadecanoyl-sphing-4-enine). Under specific conditions, may alternatively catalyze the reverse reaction, transferring glucose from cholesteryl 3-beta-D-glucoside to ceramide. Can also hydrolyze cholesteryl 3-beta-D-glucoside producing glucose and cholesterol. Catalyzes the hydrolysis of galactosylceramides/GalCers (such as beta-D-galactosyl-(1&lt;-&gt;1')-N-acylsphing-4-enine), as well as the transfer of galactose between GalCers and cholesterol in vitro, but with lower activity than with GlcCers. Contrary to GlcCer and GalCer, xylosylceramide/XylCer (such as beta-D-xyosyl-(1&lt;-&gt;1')-N-acylsphing-4-enine) is not a good substrate for hydrolysis, however it is a good xylose donor for transxylosylation activity to form cholesteryl 3-beta-D-xyloside. This Pongo abelii (Sumatran orangutan) protein is Lysosomal acid glucosylceramidase (GBA1).